A 1207-amino-acid polypeptide reads, in one-letter code: DNA-directed RNA polymerase subunit beta (1207 aa).

It belongs to the RNA polymerase beta chain family. As to quaternary structure, the RNAP catalytic core consists of 2 alpha, 1 beta, 1 beta' and 1 omega subunit. When a sigma factor is associated with the core the holoenzyme is formed, which can initiate transcription.

It catalyses the reaction RNA(n) + a ribonucleoside 5'-triphosphate = RNA(n+1) + diphosphate. In terms of biological role, DNA-dependent RNA polymerase catalyzes the transcription of DNA into RNA using the four ribonucleoside triphosphates as substrates. This chain is DNA-directed RNA polymerase subunit beta, found in Enterococcus faecalis (strain ATCC 700802 / V583).